A 679-amino-acid chain; its full sequence is MLTHKTCQARKKMQVSFVIRDAEEKQHRNGVNALQLDSNNGKLYSAGRDAIIRVWNTRTEANEKYIQSMEHHNDWVNDIVLCCNGRNLISASCDTTVKVWNAHKGFCMSTLRTHRDYVQALAYAKDREQVASAGLDKAIFLWDVNTLTALTASNNTVTTSSLTGSKDSIYSLAMNPSGTVIVSGSTENILRIWDPRTCMRSMKLRGHTENVRCLVVSPDGNQVVSGSSDGTIKVWNLGQQRCIQTIHVHKEGVWSLLMSENFQYIISGSRDRNIIVTEMRNPSNKMLVCEEKAPVLSLGYNIDKTGVWATTWNSDIRCWKLPMYDRCVLSSGGMDAQWTLGGTELACIKGGAAIKECTVLNDKRYIITKDSQDQVVVYDVLRVTKKEELGVVDYEEEVKKRNKQVYIPNWFTVDLKTGMPTIVLGQEEVDCFAAWVSIEAGLPECDDPTTEIKINYGKLLLEALLEYWTPPHSMPPNEMEPDVRGNGYFQVPKHTPVIFSEVGGRTVCRLLVRDAAGDSESTLLHETAPQWVTDVVIERNIPKFLKIPFFLQPHPQMTKPERTKKDRLVANEFIQCRKVCEHVLEKVLNAETTPSAGNANNSLQNSQSDANSEGSQLPAEERIELWCNDVIVDPNMDLRTVRHFIWKQSTDLTFQYKTKQNFNFDGSIGDSLERVTRKY.

8 WD repeats span residues 26 to 65 (QHRNGVNALQLDSNNGKLYSAGRDAIIRVWNTRTEANEKY), 71 to 110 (HHNDWVNDIVLCCNGRNLISASCDTTVKVWNAHKGFCMST), 113 to 152 (THRDYVQALAYAKDREQVASAGLDKAIFLWDVNTLTALTA), 164 to 203 (GSKDSIYSLAMNPSGTVIVSGSTENILRIWDPRTCMRSMK), 206 to 245 (GHTENVRCLVVSPDGNQVVSGSSDGTIKVWNLGQQRCIQT), 248 to 287 (VHKEGVWSLLMSENFQYIISGSRDRNIIVTEMRNPSNKML), 290 to 329 (EEKAPVLSLGYNIDKTGVWATTWNSDIRCWKLPMYDRCVL), and 349 to 388 (KGGAAIKECTVLNDKRYIITKDSQDQVVVYDVLRVTKKEE). Residues 594–615 (PSAGNANNSLQNSQSDANSEGS) form a disordered region.

This sequence belongs to the WD repeat WDR48 family. In terms of assembly, catalytic component of the Usp12-46 deubiquitylase complex consisting of Usp12-46, Wdr20 and Uaf1; regulatory subunit that, together wtih Wdr20, stabilizes Usp12-46. The Usp12-46 deubiquitylase complex associates with arr/arrow; the interaction leads to deubiquitination and stabilization of arr/arrow.

Regulatory component of the Usp12-46 deubiquitylase complex. activates deubiquitination by increasing the catalytic turnover without increasing the affinity of deubiquitinating enzymes for the substrate. The complex deubiquitylates the wg/wingless-signaling receptor arr/arrow, which stabilizes the receptor and increases its concentration at the cell surface; this enhances the sensitivity of cells to wg/wingless-signal stimulation. This increases the amplitude and spatial range of the signaling response to the wg/wingless morphogen gradient, facilitating the precise concentration-dependent regulation of its target genes. Together with Wdr20 and Usp12-46 required for wg/wingless-mediated signaling in the wing imaginal disc and for wg/wingless-dependent regulation of intestinal stem cell proliferation. In Drosophila mojavensis (Fruit fly), this protein is WD repeat-containing protein 48 homolog.